The primary structure comprises 472 residues: GTPase Der (472 aa).

EngA-type G domains are found at residues 3-166 (PIIA…IQNN) and 188-361 (IKLA…HCST). GTP contacts are provided by residues 9–16 (GRPNVGKS), 56–60 (DTGGI), 118–121 (NKID), 194–201 (GSSNVGKS), 241–245 (DTAGL), and 306–309 (NKWD). The 85-residue stretch at 362 to 446 (KRISTALLTK…PIRIQFNEPA (85 aa)) folds into the KH-like domain.

It belongs to the TRAFAC class TrmE-Era-EngA-EngB-Septin-like GTPase superfamily. EngA (Der) GTPase family. Associates with the 50S ribosomal subunit.

Functionally, GTPase that plays an essential role in the late steps of ribosome biogenesis. In Baumannia cicadellinicola subsp. Homalodisca coagulata, this protein is GTPase Der.